The following is a 146-amino-acid chain: Hemoglobin subunit beta (146 aa).

An N-acetylvaline modification is found at V1. One can recognise a Globin domain in the interval 2 to 146; that stretch reads DLTAEEKAAV…VANALAHKYH (145 aa). S44 carries the post-translational modification Phosphoserine. N6-acetyllysine is present on K59. A heme b-binding site is contributed by H63. K82 bears the N6-acetyllysine mark. Residue H92 coordinates heme b. C93 is modified (S-nitrosocysteine). At K144 the chain carries N6-acetyllysine.

Belongs to the globin family. Heterotetramer of two alpha chains and two beta chains. In terms of tissue distribution, red blood cells.

In terms of biological role, involved in oxygen transport from the lung to the various peripheral tissues. The chain is Hemoglobin subunit beta (HBB) from Rhinoceros unicornis (Greater Indian rhinoceros).